Consider the following 384-residue polypeptide: Chaperone protein DnaJ (384 aa).

The 66-residue stretch at 5-70 (DYYEVLGVAR…QKKAAYDRFG (66 aa)) folds into the J domain. The CR-type zinc-finger motif lies at 138-216 (GAQKTINVPG…CRGAGRVQKE (79 aa)). Positions 151, 154, 168, 171, 190, 193, 204, and 207 each coordinate Zn(2+). CXXCXGXG motif repeat units lie at residues 151-158 (CAACNGTG), 168-175 (CPTCSGMG), 190-197 (CPTCSGHG), and 204-211 (CQECRGAG). The disordered stretch occupies residues 300–322 (KVPPGTQSGKQLRLRGKGMPPLR).

It belongs to the DnaJ family. In terms of assembly, homodimer. It depends on Zn(2+) as a cofactor.

The protein localises to the cytoplasm. Functionally, participates actively in the response to hyperosmotic and heat shock by preventing the aggregation of stress-denatured proteins and by disaggregating proteins, also in an autonomous, DnaK-independent fashion. Unfolded proteins bind initially to DnaJ; upon interaction with the DnaJ-bound protein, DnaK hydrolyzes its bound ATP, resulting in the formation of a stable complex. GrpE releases ADP from DnaK; ATP binding to DnaK triggers the release of the substrate protein, thus completing the reaction cycle. Several rounds of ATP-dependent interactions between DnaJ, DnaK and GrpE are required for fully efficient folding. Also involved, together with DnaK and GrpE, in the DNA replication of plasmids through activation of initiation proteins. In Paracoccus denitrificans (strain Pd 1222), this protein is Chaperone protein DnaJ.